A 55-amino-acid polypeptide reads, in one-letter code: ATP synthase F(0) complex subunit 8 (55 aa).

Residues 4–24 form a helical membrane-spanning segment; that stretch reads LNPHPWFSIFITSWLILIIIL.

It belongs to the ATPase protein 8 family. As to quaternary structure, component of the ATP synthase complex composed at least of ATP5F1A/subunit alpha, ATP5F1B/subunit beta, ATP5MC1/subunit c (homooctomer), MT-ATP6/subunit a, MT-ATP8/subunit 8, ATP5ME/subunit e, ATP5MF/subunit f, ATP5MG/subunit g, ATP5MK/subunit k, ATP5MJ/subunit j, ATP5F1C/subunit gamma, ATP5F1D/subunit delta, ATP5F1E/subunit epsilon, ATP5PF/subunit F6, ATP5PB/subunit b, ATP5PD/subunit d, ATP5PO/subunit OSCP. ATP synthase complex consists of a soluble F(1) head domain (subunits alpha(3) and beta(3)) - the catalytic core - and a membrane F(0) domain - the membrane proton channel (subunits c, a, 8, e, f, g, k and j). These two domains are linked by a central stalk (subunits gamma, delta, and epsilon) rotating inside the F1 region and a stationary peripheral stalk (subunits F6, b, d, and OSCP).

It localises to the mitochondrion membrane. Functionally, subunit 8, of the mitochondrial membrane ATP synthase complex (F(1)F(0) ATP synthase or Complex V) that produces ATP from ADP in the presence of a proton gradient across the membrane which is generated by electron transport complexes of the respiratory chain. ATP synthase complex consist of a soluble F(1) head domain - the catalytic core - and a membrane F(1) domain - the membrane proton channel. These two domains are linked by a central stalk rotating inside the F(1) region and a stationary peripheral stalk. During catalysis, ATP synthesis in the catalytic domain of F(1) is coupled via a rotary mechanism of the central stalk subunits to proton translocation. In vivo, can only synthesize ATP although its ATP hydrolase activity can be activated artificially in vitro. Part of the complex F(0) domain. This chain is ATP synthase F(0) complex subunit 8, found in Pelomedusa subrufa (African side-necked turtle).